The chain runs to 157 residues: Large ribosomal subunit protein eL24 (157 aa).

The tract at residues 95–157 is disordered; it reads NQKPEVRKAQ…VSAPRVGGKR (63 aa). Residues 96–117 are compositionally biased toward basic and acidic residues; that stretch reads QKPEVRKAQREQAIRAAKEAKK. A compositionally biased stretch (low complexity) spans 123–145; the sequence is KKQTTQSSKAPAKSAQKQKIAKP.

The protein belongs to the eukaryotic ribosomal protein eL24 family. Component of the large ribosomal subunit.

The protein resides in the cytoplasm. In terms of biological role, component of the large ribosomal subunit. The ribosome is a large ribonucleoprotein complex responsible for the synthesis of proteins in the cell. Plays an essential role in early embryonic development. In Danio rerio (Zebrafish), this protein is Large ribosomal subunit protein eL24 (rpl24).